The following is a 397-amino-acid chain: CCA-adding enzyme (397 aa).

ATP-binding residues include glycine 27 and arginine 30. CTP contacts are provided by glycine 27 and arginine 30. Residues aspartate 40 and aspartate 42 each contribute to the Mg(2+) site. Residues arginine 111, aspartate 154, arginine 157, arginine 160, and arginine 163 each coordinate ATP. CTP-binding residues include arginine 111, aspartate 154, arginine 157, arginine 160, and arginine 163.

Belongs to the tRNA nucleotidyltransferase/poly(A) polymerase family. Bacterial CCA-adding enzyme type 3 subfamily. As to quaternary structure, homodimer. The cofactor is Mg(2+).

It carries out the reaction a tRNA precursor + 2 CTP + ATP = a tRNA with a 3' CCA end + 3 diphosphate. The catalysed reaction is a tRNA with a 3' CCA end + 2 CTP + ATP = a tRNA with a 3' CCACCA end + 3 diphosphate. Functionally, catalyzes the addition and repair of the essential 3'-terminal CCA sequence in tRNAs without using a nucleic acid template. Adds these three nucleotides in the order of C, C, and A to the tRNA nucleotide-73, using CTP and ATP as substrates and producing inorganic pyrophosphate. tRNA 3'-terminal CCA addition is required both for tRNA processing and repair. Also involved in tRNA surveillance by mediating tandem CCA addition to generate a CCACCA at the 3' terminus of unstable tRNAs. While stable tRNAs receive only 3'-terminal CCA, unstable tRNAs are marked with CCACCA and rapidly degraded. The chain is CCA-adding enzyme from Bacillus licheniformis (strain ATCC 14580 / DSM 13 / JCM 2505 / CCUG 7422 / NBRC 12200 / NCIMB 9375 / NCTC 10341 / NRRL NRS-1264 / Gibson 46).